Here is a 185-residue protein sequence, read N- to C-terminus: ATP synthase subunit b (185 aa).

Residues 28–48 (VVLVGFAVLMYIVVKFVVPMF) form a helical membrane-spanning segment.

This sequence belongs to the ATPase B chain family. In terms of assembly, F-type ATPases have 2 components, F(1) - the catalytic core - and F(0) - the membrane proton channel. F(1) has five subunits: alpha(3), beta(3), gamma(1), delta(1), epsilon(1). F(0) has three main subunits: a(1), b(2) and c(10-14). The alpha and beta chains form an alternating ring which encloses part of the gamma chain. F(1) is attached to F(0) by a central stalk formed by the gamma and epsilon chains, while a peripheral stalk is formed by the delta and b chains.

It is found in the cell membrane. F(1)F(0) ATP synthase produces ATP from ADP in the presence of a proton or sodium gradient. F-type ATPases consist of two structural domains, F(1) containing the extramembraneous catalytic core and F(0) containing the membrane proton channel, linked together by a central stalk and a peripheral stalk. During catalysis, ATP synthesis in the catalytic domain of F(1) is coupled via a rotary mechanism of the central stalk subunits to proton translocation. In terms of biological role, component of the F(0) channel, it forms part of the peripheral stalk, linking F(1) to F(0). This is ATP synthase subunit b from Paenarthrobacter aurescens (strain TC1).